The following is a 346-amino-acid chain: DNA primase small subunit PriS (346 aa).

Active-site residues include aspartate 95 and aspartate 97. Positions 106, 108, 114, and 117 each coordinate Zn(2+). The short motif at cysteine 106 to cysteine 117 is the Zinc knuckle motif element. The active site involves aspartate 280.

It belongs to the eukaryotic-type primase small subunit family. In terms of assembly, heterodimer of a small subunit (PriS) and a large subunit (PriL). Mg(2+) serves as cofactor. Requires Mn(2+) as cofactor.

Its function is as follows. Catalytic subunit of DNA primase, an RNA polymerase that catalyzes the synthesis of short RNA molecules used as primers for DNA polymerase during DNA replication. The small subunit contains the primase catalytic core and has DNA synthesis activity on its own. Binding to the large subunit stabilizes and modulates the activity, increasing the rate of DNA synthesis while decreasing the length of the DNA fragments, and conferring RNA synthesis capability. The DNA polymerase activity may enable DNA primase to also catalyze primer extension after primer synthesis. May also play a role in DNA repair. In Pyrococcus horikoshii (strain ATCC 700860 / DSM 12428 / JCM 9974 / NBRC 100139 / OT-3), this protein is DNA primase small subunit PriS.